The primary structure comprises 381 residues: Probable serine/threonine-protein kinase PBL25 (381 aa).

The S-palmitoyl cysteine moiety is linked to residue C3. The tract at residues 16–41 (GSSMPAPYKQPNSPKRTTGEVVAKNA) is disordered. Residue T54 is modified to Phosphothreonine. In terms of domain architecture, Protein kinase spans 65 to 342 (FRQECLIGEG…SDVITALSFL (278 aa)). ATP contacts are provided by residues 71–79 (IGEGGFGRV) and K94. Y139 carries the phosphotyrosine modification. The Proton acceptor role is filled by D192. S196 and S226 each carry phosphoserine. At T232 the chain carries Phosphothreonine. Phosphotyrosine is present on Y240. The disordered stretch occupies residues 347–381 (NSSNTGSNHLQQNRSNKYQDAVQWDSSPRYANSQM). Positions 355–381 (HLQQNRSNKYQDAVQWDSSPRYANSQM) are enriched in polar residues.

Belongs to the protein kinase superfamily. Ser/Thr protein kinase family.

It is found in the cell membrane. It carries out the reaction L-seryl-[protein] + ATP = O-phospho-L-seryl-[protein] + ADP + H(+). It catalyses the reaction L-threonyl-[protein] + ATP = O-phospho-L-threonyl-[protein] + ADP + H(+). Its function is as follows. May be involved in plant defense signaling. The sequence is that of Probable serine/threonine-protein kinase PBL25 from Arabidopsis thaliana (Mouse-ear cress).